The following is a 209-amino-acid chain: Chalcone isomerase-like protein 2 (209 aa).

It belongs to the chalcone isomerase family. Component an active demethylxanthohumol (DMX) biosynthetic metabolon in glandular trichomes (lupulin glands) that encompasses a chalcone synthase (CHS) and a membrane-bound prenyltransferase. Interacts with CHS_H1 and PT1L. Mostly expressed in glandular trichomes (lupulin glands), and, to a lower extent, in cones, cones bracts, leaves, stems and roots.

Its subcellular location is the cytoplasm. It carries out the reaction a chalcone = a flavanone.. It participates in secondary metabolite biosynthesis; flavonoid biosynthesis. Its function is as follows. Involved in the biosynthesis of prenylated phenolics natural products which contribute to the bitter taste of beer and display broad biological activities. Involved in anthocyanin biosynthesis. Polyketide binding proteins (PBP) which promotes the catalytic activities of CHS_H1 and PT1L and triggers demethylxanthohumol (DMX) production. The polypeptide is Chalcone isomerase-like protein 2 (Humulus lupulus (European hop)).